The sequence spans 323 residues: MTATTTAQPSGPVPPASPTAARRLLLVHAHPDDEVITTGATMAAYAAEGAHVTLVTCTAGEEGEVLVPELAHLAADREDRLAEIRVVELANAMTALGVADHRFLGGVGCYRDSGMMGTPANDKPHAFWRADLDEAAAHLVKVVREIRPQVLVTYDENGGYGHPDHIQAHRVAMRAAELAADPAFAPEHGAVWDVAKIYWTAMPESVLAEGIQALKEAGDTSGFIAVESVEDLSFGTDDALVTTTIDGTAYMENKREGMRAYPTQISMGQGFFALSNSIGMEFMAHEFYQLVKGAAEGSDTGLEKDLFAGLGIADGTAAGVSQG.

Residues His-30, Asp-33, and His-165 each coordinate Zn(2+).

This sequence belongs to the MshB deacetylase family. Requires Zn(2+) as cofactor.

The catalysed reaction is 1D-myo-inositol 2-acetamido-2-deoxy-alpha-D-glucopyranoside + H2O = 1D-myo-inositol 2-amino-2-deoxy-alpha-D-glucopyranoside + acetate. In terms of biological role, catalyzes the deacetylation of 1D-myo-inositol 2-acetamido-2-deoxy-alpha-D-glucopyranoside (GlcNAc-Ins) in the mycothiol biosynthesis pathway. In Catenulispora acidiphila (strain DSM 44928 / JCM 14897 / NBRC 102108 / NRRL B-24433 / ID139908), this protein is 1D-myo-inositol 2-acetamido-2-deoxy-alpha-D-glucopyranoside deacetylase 1.